We begin with the raw amino-acid sequence, 388 residues long: MNKQIFVLYFNIFLIFLGIGLVIPVLPVYLKDLGLTGSDLGLLVAAFALSQMIISPFGGTLADKLGKKLIICIGLILFSVSEFMFAVGHNFSVLMLSRVIGGMSAGMVMPGVTGLIADISPSHQKAKNFGYMSAIINSGFILGPGIGGFMAEVSHRMPFYFAGALGILAFIMSIVLIHDPKKSTTSGFQKLEPQLLTKINWKVFITPVILTLVLSLGLSAFETLYSLYTADKVNYSPKDISIAITGGGIFGALFQIYFFDKFMKYFSELTFIAWSLLYSVVVLILLVFANGYWSIMLISFVVFIGFDMIRPAITNYFSNIAGERQGFAGGLNSTFTSMGNFIGPLIAGALFDVHIEAPIYMAIGVSLAGVVIVLIEKQHRAKLKEQNM.

12 consecutive transmembrane segments (helical) span residues 5-25 (IFVL…VIPV), 42-62 (LLVA…GTLA), 69-89 (LIIC…AVGH), 99-119 (VIGG…IADI), 129-149 (FGYM…IGGF), 157-177 (MPFY…IVLI), 201-221 (WKVF…LSAF), 239-259 (DISI…IYFF), 269-289 (LTFI…LVFA), 293-313 (WSIM…RPAI), 331-351 (LNST…GALF), and 355-375 (IEAP…IVLI).

It belongs to the major facilitator superfamily. TCR/Tet family.

The protein localises to the cell membrane. Functionally, involved in quinolone resistance. May constitute a membrane-associated active efflux pump of hydrophilic quinolones. This chain is Quinolone resistance protein NorA (norA), found in Staphylococcus aureus (strain MSSA476).